A 514-amino-acid polypeptide reads, in one-letter code: Major facilitator superfamily domain-containing protein 4A (514 aa).

The next 5 helical transmembrane spans lie at 19–39 (LTYW…GPTL), 53–73 (ISWV…LGGV), 82–102 (LWAL…IPFC), 107–127 (VLAL…TVAN), and 139–159 (AVFL…SPLI). Asn-177 and Asn-203 each carry an N-linked (GlcNAc...) asparagine glycan. 7 consecutive transmembrane segments (helical) span residues 221-241 (YAFW…LMLL), 307-327 (FFAI…LTGA), 347-367 (VAGY…LLSI), 376-396 (ATMV…LLIF), 400-420 (VVFL…TFPS), 438-458 (VLVT…GSIF), and 466-486 (FLVC…LLLF).

It belongs to the major facilitator superfamily.

The protein localises to the membrane. This chain is Major facilitator superfamily domain-containing protein 4A (MFSD4A), found in Pongo abelii (Sumatran orangutan).